Here is a 528-residue protein sequence, read N- to C-terminus: Alpha-amylase (528 aa).

Residues 1–28 (MNKKWLNIPALIALLAAIAFGSVAPAEA) form the signal peptide. Ca(2+) contacts are provided by asparagine 168 and aspartate 228. Aspartate 258 serves as the catalytic Nucleophile. Histidine 262 is a Ca(2+) binding site. Glutamate 286 (proton donor) is an active-site residue.

The protein belongs to the glycosyl hydrolase 13 family. In terms of assembly, monomer. Ca(2+) is required as a cofactor.

It carries out the reaction Endohydrolysis of (1-&gt;4)-alpha-D-glucosidic linkages in polysaccharides containing three or more (1-&gt;4)-alpha-linked D-glucose units.. The polypeptide is Alpha-amylase (Niallia circulans (Bacillus circulans)).